A 381-amino-acid polypeptide reads, in one-letter code: Tryptophan--tRNA ligase (381 aa).

Positions 82-90 (PSLGMHIGH) match the 'HIGH' region motif. The 'KMSKS' region signature appears at 254–258 (KMSSS).

Belongs to the class-I aminoacyl-tRNA synthetase family.

The protein localises to the cytoplasm. It carries out the reaction tRNA(Trp) + L-tryptophan + ATP = L-tryptophyl-tRNA(Trp) + AMP + diphosphate + H(+). The polypeptide is Tryptophan--tRNA ligase (Sulfolobus acidocaldarius (strain ATCC 33909 / DSM 639 / JCM 8929 / NBRC 15157 / NCIMB 11770)).